The chain runs to 61 residues: Large ribosomal subunit protein uL30 (61 aa).

It belongs to the universal ribosomal protein uL30 family. Part of the 50S ribosomal subunit.

In Mycolicibacterium gilvum (strain PYR-GCK) (Mycobacterium gilvum (strain PYR-GCK)), this protein is Large ribosomal subunit protein uL30.